A 213-amino-acid chain; its full sequence is Heavy metal-binding protein HIP (213 aa).

The C1q domain occupies 80–213 (FKSHHVAFSA…MSTFTGFMLH (134 aa)).

In terms of tissue distribution, pallium, gill and liver.

The protein localises to the secreted. In terms of biological role, binds heavy metals. May function as a carrier of divalent cations in plasma. The chain is Heavy metal-binding protein HIP from Mytilus edulis (Blue mussel).